Reading from the N-terminus, the 911-residue chain is Protein translocase subunit SecA (911 aa).

ATP-binding positions include glutamine 86, 104–108, and aspartate 512; that span reads GEGKT. The interval 869–888 is disordered; that stretch reads ALADDGQPQGAQPVRNVLPK. The Zn(2+) site is built by cysteine 895, cysteine 897, cysteine 906, and histidine 907.

The protein belongs to the SecA family. Monomer and homodimer. Part of the essential Sec protein translocation apparatus which comprises SecA, SecYEG and auxiliary proteins SecDF-YajC and YidC. The cofactor is Zn(2+).

It localises to the cell inner membrane. The protein localises to the cytoplasm. The catalysed reaction is ATP + H2O + cellular proteinSide 1 = ADP + phosphate + cellular proteinSide 2.. Functionally, part of the Sec protein translocase complex. Interacts with the SecYEG preprotein conducting channel. Has a central role in coupling the hydrolysis of ATP to the transfer of proteins into and across the cell membrane, serving both as a receptor for the preprotein-SecB complex and as an ATP-driven molecular motor driving the stepwise translocation of polypeptide chains across the membrane. This Bordetella parapertussis (strain 12822 / ATCC BAA-587 / NCTC 13253) protein is Protein translocase subunit SecA.